Reading from the N-terminus, the 486-residue chain is Cytosol aminopeptidase (486 aa).

Lys-249 and Asp-254 together coordinate Zn(2+). Lys-261 is a catalytic residue. The Zn(2+) site is built by Asp-272, Asp-331, and Glu-333. Residue Arg-335 is part of the active site.

This sequence belongs to the peptidase M17 family. In terms of assembly, homohexamer. Requires Zn(2+) as cofactor.

The protein resides in the cytoplasm. The enzyme catalyses Release of an N-terminal amino acid, Xaa-|-Yaa-, in which Xaa is preferably Leu, but may be other amino acids including Pro although not Arg or Lys, and Yaa may be Pro. Amino acid amides and methyl esters are also readily hydrolyzed, but rates on arylamides are exceedingly low.. The catalysed reaction is Release of N-terminal proline from a peptide.. In terms of biological role, presumably involved in the processing and regular turnover of intracellular proteins. Catalyzes the removal of unsubstituted N-terminal amino acids from various peptides. This is Cytosol aminopeptidase from Encephalitozoon cuniculi (strain GB-M1) (Microsporidian parasite).